The primary structure comprises 1025 residues: Exocyst complex component 6 (1025 aa).

Basic and acidic residues-rich tracts occupy residues 1 to 10 (MSNKKQKEEI) and 22 to 52 (MVRD…ENVK). Disordered regions lie at residues 1–122 (MSNK…TRHL), 135–154 (LSSQ…DQAK), and 666–691 (QFGD…DENE). A coiled-coil region spans residues 19–68 (LKTMVRDKDKEQKEEKREKKEKKRLEKKEAENVKKEKKKEKKELKKIGKA). Over residues 71–93 (SGSITSDSSTHSGAQEFDSYGND) the composition is skewed to low complexity. The span at 104-118 (SIDSNGLSSSGQPMQ) shows a compositional bias: polar residues. 2 stretches are compositionally biased toward low complexity: residues 135 to 147 (LSSQ…LPHS) and 666 to 677 (QFGDKNLNNNNN). Residues 678–691 (NDDDDDYFDEDENE) are compositionally biased toward acidic residues.

It belongs to the SEC15 family. The exocyst complex is composed of sec3/exoc1, sec5/exoc2, sec6/exoc3, sec8/exoc4, sec10/exoc5, sec15/exoc6, exo70/exoc7 and exo84/exoc8.

It localises to the cytoplasm. Its subcellular location is the perinuclear region. It is found in the midbody. The protein resides in the midbody ring. Component of the exocyst complex involved in the docking of exocytic vesicles with fusion sites on the plasma membrane. This Dictyostelium discoideum (Social amoeba) protein is Exocyst complex component 6 (exoc6).